The sequence spans 492 residues: Protein nucleotidyltransferase YdiU (492 aa).

ATP contacts are provided by glycine 88, glycine 90, arginine 91, lysine 111, aspartate 123, glycine 124, arginine 174, and arginine 181. The Proton acceptor role is filled by aspartate 250. 2 residues coordinate Mg(2+): asparagine 251 and aspartate 260. Aspartate 260 is a binding site for ATP.

Belongs to the SELO family. The cofactor is Mg(2+). Requires Mn(2+) as cofactor.

The enzyme catalyses L-seryl-[protein] + ATP = 3-O-(5'-adenylyl)-L-seryl-[protein] + diphosphate. The catalysed reaction is L-threonyl-[protein] + ATP = 3-O-(5'-adenylyl)-L-threonyl-[protein] + diphosphate. It catalyses the reaction L-tyrosyl-[protein] + ATP = O-(5'-adenylyl)-L-tyrosyl-[protein] + diphosphate. It carries out the reaction L-histidyl-[protein] + UTP = N(tele)-(5'-uridylyl)-L-histidyl-[protein] + diphosphate. The enzyme catalyses L-seryl-[protein] + UTP = O-(5'-uridylyl)-L-seryl-[protein] + diphosphate. The catalysed reaction is L-tyrosyl-[protein] + UTP = O-(5'-uridylyl)-L-tyrosyl-[protein] + diphosphate. Nucleotidyltransferase involved in the post-translational modification of proteins. It can catalyze the addition of adenosine monophosphate (AMP) or uridine monophosphate (UMP) to a protein, resulting in modifications known as AMPylation and UMPylation. This Rhodopseudomonas palustris (strain HaA2) protein is Protein nucleotidyltransferase YdiU.